The primary structure comprises 242 residues: 3-deoxy-manno-octulosonate cytidylyltransferase (242 aa).

This sequence belongs to the KdsB family.

It is found in the cytoplasm. The catalysed reaction is 3-deoxy-alpha-D-manno-oct-2-ulosonate + CTP = CMP-3-deoxy-beta-D-manno-octulosonate + diphosphate. Its pathway is nucleotide-sugar biosynthesis; CMP-3-deoxy-D-manno-octulosonate biosynthesis; CMP-3-deoxy-D-manno-octulosonate from 3-deoxy-D-manno-octulosonate and CTP: step 1/1. It functions in the pathway bacterial outer membrane biogenesis; lipopolysaccharide biosynthesis. In terms of biological role, activates KDO (a required 8-carbon sugar) for incorporation into bacterial lipopolysaccharide in Gram-negative bacteria. This Anaeromyxobacter dehalogenans (strain 2CP-1 / ATCC BAA-258) protein is 3-deoxy-manno-octulosonate cytidylyltransferase.